The primary structure comprises 212 residues: Cytidylate kinase (212 aa).

7–15 (GPAASGKGT) is a binding site for ATP.

It belongs to the cytidylate kinase family. Type 1 subfamily.

It is found in the cytoplasm. The enzyme catalyses CMP + ATP = CDP + ADP. It carries out the reaction dCMP + ATP = dCDP + ADP. The polypeptide is Cytidylate kinase (Nitrobacter winogradskyi (strain ATCC 25391 / DSM 10237 / CIP 104748 / NCIMB 11846 / Nb-255)).